An 802-amino-acid chain; its full sequence is E3 ubiquitin-protein ligase UHRF2 (802 aa).

One can recognise a Ubiquitin-like domain in the interval 1 to 78 (MWIQVRTIDG…IQLLVRPDPD (78 aa)). 2 disordered regions span residues 80–116 (LPGTSTQIEAKPCSNSPPKVKKAPRVGPSNQPSTSAR) and 153–197 (RASD…STSN). Polar residues-rich tracts occupy residues 82 to 96 (GTSTQIEAKPCSNSP), 153 to 177 (RASDGQSRGKTPLKNGSSCKRTNGN), and 188 to 197 (KLDSVPSTSN). The tract at residues 117 to 311 (ARLIDPGFGI…VDEIFKIERP (195 aa)) is required for interaction with histone H3. Residues 194 to 288 (STSNSDCVAA…KELRVKIFLG (95 aa)) form an interaction with PCNP region. The PHD-type zinc-finger motif lies at 344–395 (SCSCRVCGGKHEPNMQLLCDECNVAYHIYCLNPPLDKVPEEEYWYCPSCKTD). The interval 414–644 (KMPSASTESR…LQYPAGYPSD (231 aa)) is methyl-CpG binding and interaction with HDAC1. In terms of domain architecture, YDG spans 448–612 (GPIPGIPVGS…FLVWRYLLRR (165 aa)). The segment at 640-674 (GYPSDKEGKKPKGQSKKQPSGTTKRPISDDDCPSA) is disordered. Serine 667 carries the post-translational modification Phosphoserine. The segment at 733–772 (CVCCQELVYQPVTTECFHNVCKDCLQRSFKAQVFSCPACR) adopts an RING-type zinc-finger fold.

In terms of assembly, homodimer; disulfide-linked. Binds methylated CpG containing oligonucleotides. Interacts with H3; the interaction has a preference for the 'Lys-9' trimethylated form of H3 (H3K9me3). Interacts with PCNP. Interacts with HDAC1. Interacts directly with CCNE1; the interaction ubiquitinates CCNE1 and appears independent of CCNE1 phosphorylation. Interacts with CCND1; the interaction ubiquitinates CCND1 and appears independent of CCND1 phosphorylation. Interacts with p53/TP53 and RB1. Interacts with UBE2I. Interacts with ZNF618. Interacts with UHRF1. Interacts with FANCD2. Interacts with ATR. Interacts with PCNA. May be autoubiquitinated; which may lead to proteasomal degradation. Post-translationally, phosphorylated. Phosphorylation may be mediated by CDK2. In terms of processing, autosumoylated.

The protein localises to the nucleus. It localises to the chromosome. The catalysed reaction is S-ubiquitinyl-[E2 ubiquitin-conjugating enzyme]-L-cysteine + [acceptor protein]-L-lysine = [E2 ubiquitin-conjugating enzyme]-L-cysteine + N(6)-ubiquitinyl-[acceptor protein]-L-lysine.. The protein operates within protein modification; protein ubiquitination. E3 ligase activity is robustly activated by 5-hydroxymethylcytosine. E3 ubiquitin ligase that plays important roles in DNA methylation, histone modifications, cell cycle and DNA repair. Acts as a specific reader for 5-hydroxymethylcytosine (5hmC) and thereby recruits various substrates to these sites to ubiquitinate them. This activity also allows the maintenance of 5mC levels at specific genomic loci and regulates neuron-related gene expression. Participates in cell cycle regulation by ubiquitinating cyclins CCND1 and CCNE1 and thereby inducing G1 arrest. Also ubiquitinates PCNP leading to its degradation by the proteasome. Plays an active role in DNA damage repair by ubiquitinating p21/CDKN1A leading to its proteasomal degradation. Also promotes DNA repair by acting as an interstrand cross-links (ICLs) sensor. Mechanistically, cooperates with UHRF1 to ensure recruitment of FANCD2 to ICLs, leading to FANCD2 monoubiquitination and subsequent activation. Contributes to UV-induced DNA damage response by physically interacting with ATR in response to irradiation, thereby promoting ATR activation. This Homo sapiens (Human) protein is E3 ubiquitin-protein ligase UHRF2 (UHRF2).